We begin with the raw amino-acid sequence, 288 residues long: Nucleotide-binding protein NE1849 (288 aa).

8–15 (GLSGSGKS) serves as a coordination point for ATP. 57–60 (DMRS) provides a ligand contact to GTP.

The protein belongs to the RapZ-like family.

Displays ATPase and GTPase activities. The sequence is that of Nucleotide-binding protein NE1849 from Nitrosomonas europaea (strain ATCC 19718 / CIP 103999 / KCTC 2705 / NBRC 14298).